Consider the following 61-residue polypeptide: Small ribosomal subunit protein uS14 (61 aa).

Zn(2+) is bound by residues cysteine 24, cysteine 27, cysteine 40, and cysteine 43.

Belongs to the universal ribosomal protein uS14 family. Zinc-binding uS14 subfamily. Part of the 30S ribosomal subunit. Contacts proteins S3 and S10. Zn(2+) is required as a cofactor.

Functionally, binds 16S rRNA, required for the assembly of 30S particles and may also be responsible for determining the conformation of the 16S rRNA at the A site. This is Small ribosomal subunit protein uS14 from Sulfurovum sp. (strain NBC37-1).